Reading from the N-terminus, the 351-residue chain is Nicotinate-nucleotide--dimethylbenzimidazole phosphoribosyltransferase (351 aa).

Glutamate 317 (proton acceptor) is an active-site residue.

This sequence belongs to the CobT family.

The catalysed reaction is 5,6-dimethylbenzimidazole + nicotinate beta-D-ribonucleotide = alpha-ribazole 5'-phosphate + nicotinate + H(+). Its pathway is nucleoside biosynthesis; alpha-ribazole biosynthesis; alpha-ribazole from 5,6-dimethylbenzimidazole: step 1/2. In terms of biological role, catalyzes the synthesis of alpha-ribazole-5'-phosphate from nicotinate mononucleotide (NAMN) and 5,6-dimethylbenzimidazole (DMB). This is Nicotinate-nucleotide--dimethylbenzimidazole phosphoribosyltransferase from Pseudomonas aeruginosa (strain UCBPP-PA14).